Here is a 295-residue protein sequence, read N- to C-terminus: Elongation factor Ts (295 aa).

Positions threonine 79 to valine 82 are involved in Mg(2+) ion dislocation from EF-Tu.

The protein belongs to the EF-Ts family.

It localises to the cytoplasm. Its function is as follows. Associates with the EF-Tu.GDP complex and induces the exchange of GDP to GTP. It remains bound to the aminoacyl-tRNA.EF-Tu.GTP complex up to the GTP hydrolysis stage on the ribosome. This is Elongation factor Ts from Bacillus mycoides (strain KBAB4) (Bacillus weihenstephanensis).